The following is a 343-amino-acid chain: Dihydroorotase (343 aa).

His13 and His15 together coordinate Zn(2+). Substrate-binding positions include 15–17 and Asn41; that span reads HLR. Residues Lys99, His136, and His174 each coordinate Zn(2+). Lys99 is modified (N6-carboxylysine). Substrate is bound at residue His136. Residue Leu219 coordinates substrate. Asp247 is a binding site for Zn(2+). Asp247 is a catalytic residue. His251 and Ala263 together coordinate substrate.

The protein belongs to the metallo-dependent hydrolases superfamily. DHOase family. Class II DHOase subfamily. Homodimer. The cofactor is Zn(2+).

It carries out the reaction (S)-dihydroorotate + H2O = N-carbamoyl-L-aspartate + H(+). Its pathway is pyrimidine metabolism; UMP biosynthesis via de novo pathway; (S)-dihydroorotate from bicarbonate: step 3/3. Catalyzes the reversible cyclization of carbamoyl aspartate to dihydroorotate. This chain is Dihydroorotase, found in Shewanella baltica (strain OS223).